A 253-amino-acid polypeptide reads, in one-letter code: 1-(5-phosphoribosyl)-5-[(5-phosphoribosylamino)methylideneamino] imidazole-4-carboxamide isomerase (253 aa).

Asp11 serves as the catalytic Proton acceptor. Asp132 acts as the Proton donor in catalysis.

Belongs to the HisA/HisF family.

The protein resides in the cytoplasm. The catalysed reaction is 1-(5-phospho-beta-D-ribosyl)-5-[(5-phospho-beta-D-ribosylamino)methylideneamino]imidazole-4-carboxamide = 5-[(5-phospho-1-deoxy-D-ribulos-1-ylimino)methylamino]-1-(5-phospho-beta-D-ribosyl)imidazole-4-carboxamide. It functions in the pathway amino-acid biosynthesis; L-histidine biosynthesis; L-histidine from 5-phospho-alpha-D-ribose 1-diphosphate: step 4/9. This is 1-(5-phosphoribosyl)-5-[(5-phosphoribosylamino)methylideneamino] imidazole-4-carboxamide isomerase from Methylobacterium nodulans (strain LMG 21967 / CNCM I-2342 / ORS 2060).